The sequence spans 288 residues: Alpha/beta hydrolase domain-containing protein 17B (288 aa).

Residues Ser170, Asp235, and His264 each act as charge relay system in the active site.

It belongs to the AB hydrolase superfamily. ABHD17 family. Post-translationally, palmitoylated on cysteine residues located in a cysteine cluster at the N-terminus which promotes membrane localization.

The protein localises to the cell membrane. It localises to the recycling endosome membrane. It is found in the cell projection. Its subcellular location is the dendritic spine. The protein resides in the postsynaptic density membrane. It catalyses the reaction S-hexadecanoyl-L-cysteinyl-[protein] + H2O = L-cysteinyl-[protein] + hexadecanoate + H(+). In terms of biological role, hydrolyzes fatty acids from S-acylated cysteine residues in proteins. Has depalmitoylating activity towards NRAS. In Gallus gallus (Chicken), this protein is Alpha/beta hydrolase domain-containing protein 17B.